The chain runs to 194 residues: Lytic chitin monooxygenase (194 aa).

The signal sequence occupies residues 1–28; it reads MKKSLLTIVLAFSFVLGGAALAPTVSEA. Cu cation contacts are provided by His29 and His114. A Chitin-binding type-4 domain is found at 29-191; the sequence is HGYVASPGSR…VNAFYQAIDV (163 aa).

Requires Cu(2+) as cofactor.

It localises to the secreted. It catalyses the reaction [(1-&gt;4)-N-acetyl-beta-D-glucosaminyl]n+m + reduced acceptor + O2 = [(1-&gt;4)-N-acetyl-beta-D-glucosaminyl]m-1-(1-&gt;4)-2-(acetylamino)-2-deoxy-D-glucono-1,5-lactone + [(1-&gt;4)-N-acetyl-beta-D-glucosaminyl]n + acceptor + H2O.. It participates in glycan degradation; chitin degradation. Its function is as follows. Involved in chitin degradation. Catalyzes the oxidative cleavage of glycosidic bonds in both alpha- and beta-chitin via a copper-dependent mechanism, leading to oxidized chitooligosaccharides with a dominance of even-numbered products. Acts synergistically with the chitinase EfChi18A, and combining the two enzymes leads to rapid and complete depolymerization of crystalline chitin, especially with beta-chitin as a substrate. Is likely involved in a chitin degradation pathway that allows E.faecalis V583 to grow on chitin as a carbon source. The chain is Lytic chitin monooxygenase from Enterococcus faecalis (strain ATCC 700802 / V583).